A 718-amino-acid chain; its full sequence is DNA ligase (718 aa).

Residues 44 to 48, 93 to 94, and Glu127 each bind NAD(+); these read DADYD and SL. Lys129 functions as the N6-AMP-lysine intermediate in the catalytic mechanism. Positions 150, 186, 302, and 326 each coordinate NAD(+). 4 residues coordinate Zn(2+): Cys432, Cys435, Cys456, and Cys462. The BRCT domain maps to 640–718; it reads TAGSPVAGKT…EDQWLALISG (79 aa).

It belongs to the NAD-dependent DNA ligase family. LigA subfamily. Mg(2+) is required as a cofactor. It depends on Mn(2+) as a cofactor.

The catalysed reaction is NAD(+) + (deoxyribonucleotide)n-3'-hydroxyl + 5'-phospho-(deoxyribonucleotide)m = (deoxyribonucleotide)n+m + AMP + beta-nicotinamide D-nucleotide.. Functionally, DNA ligase that catalyzes the formation of phosphodiester linkages between 5'-phosphoryl and 3'-hydroxyl groups in double-stranded DNA using NAD as a coenzyme and as the energy source for the reaction. It is essential for DNA replication and repair of damaged DNA. This is DNA ligase from Rhizobium johnstonii (strain DSM 114642 / LMG 32736 / 3841) (Rhizobium leguminosarum bv. viciae).